We begin with the raw amino-acid sequence, 675 residues long: DNA ligase (675 aa).

NAD(+) contacts are provided by residues 35–39, 84–85, and Glu-115; these read DSEYD and SL. The N6-AMP-lysine intermediate role is filled by Lys-117. Positions 138, 175, 292, and 316 each coordinate NAD(+). 4 residues coordinate Zn(2+): Cys-410, Cys-413, Cys-428, and Cys-434. One can recognise a BRCT domain in the interval 593-675; sequence QIVQPLLGRT…RNFLDDTSFP (83 aa).

It belongs to the NAD-dependent DNA ligase family. LigA subfamily. The cofactor is Mg(2+). It depends on Mn(2+) as a cofactor.

The catalysed reaction is NAD(+) + (deoxyribonucleotide)n-3'-hydroxyl + 5'-phospho-(deoxyribonucleotide)m = (deoxyribonucleotide)n+m + AMP + beta-nicotinamide D-nucleotide.. Its function is as follows. DNA ligase that catalyzes the formation of phosphodiester linkages between 5'-phosphoryl and 3'-hydroxyl groups in double-stranded DNA using NAD as a coenzyme and as the energy source for the reaction. It is essential for DNA replication and repair of damaged DNA. The chain is DNA ligase from Nitrosococcus oceani (strain ATCC 19707 / BCRC 17464 / JCM 30415 / NCIMB 11848 / C-107).